Here is a 946-residue protein sequence, read N- to C-terminus: MTLVLFATEYDSAHIVANVLSQTPTDHCVFPLLVKHQVSRRVYFCLQTQKCSDSRRVAPVFAVNNETLQLSRYLAARQPIPLSALIASLDEAETRPLYRHLFRTPVLSPEHGGEVREFKHLVYFHHAAVLRHLNQVFLCPTSPSWFISVFGHTEGQVLLTMAYYLFEGQYSTISTVEEYVRSFCTRDLGTIIPTHASMGEFARLLLGSPFRQRVSAFVAYAVARNRRDYTELEQVDTQINAFRERARLPDTVCVHYVYLAYRTALARARLLEYRRVVAYDADAAPEAQCTREPGFLGRRLSTELLDVMQKYFSLDNFLHDYVETHLLRLDESPHSATSPHGLGLAGYGGRIDGTHLAGFFGTSTQLARQLERINTLSESVFSPLERSLSGLLRLCASLRTAQTYTTGTLTRYSQRRYLLPEPALAPLLERPLPVYRVHLPNDQHVFCAVASETWHRSLFPRDLLRHVPDSRFSDEALTETVWLHDDDVASTSPETQFYYTRHEVFNERLPVFNFVADFDLRLRDGVSGLARHTVFELCRGLRRVWMTVWASLFGYTHPDRHPVYFFKSACPPNSVPVDAAGAPFDDDDYLDYRDERDTEEDEDGKEDKNNVPGNGVFQKTTSSVDTSPPYCRCKGKLGLRIITPFPACTIAVHPSVLRAVAQVLNHAVCLDAELHTLLDPISHPESSLDTGIYHHGRSVRLPYMYKMDQDDGYFMHRRLLPLFIVPDAYREHPLGFVRAQLDLRNLLHHHPPHDLPALPLSPPPRVILSVRDKICPSTEANFIETRSLNVTRYRRRGLTEVLAYHLYGGDGATAAAISDTDLQRLVVTRVWPPLLEHLTQHYEPHVSEQFTAPHVLLFQPHGACCVAVKRRDGARTRDFRCLNYTHRNPQETVQVFIDLRTEHSYALWASLWSRCFTKKCHSNAKNVHISIKIRPPDAPMPPATAV.

Residues Arg596–Thr626 form a disordered region. Positions Phe617–Thr626 are enriched in polar residues. A CHC2-type zinc finger spans residues Cys881–Cys920.

It belongs to the herpesviridae DNA primase family. In terms of assembly, associates with the helicase and the primase-associated factor to form the helicase-primase factor.

The protein localises to the host nucleus. Its function is as follows. Essential component of the helicase/primase complex. Unwinds the DNA at the replication forks and generates single-stranded DNA for both leading and lagging strand synthesis. The primase initiates primer synthesis and thereby produces large amount of short RNA primers on the lagging strand that the polymerase elongates using dNTPs. This Human cytomegalovirus (strain Merlin) (HHV-5) protein is DNA primase (UL70).